We begin with the raw amino-acid sequence, 390 residues long: Tryptophan synthase beta chain 2 (390 aa).

Lys83 is modified (N6-(pyridoxal phosphate)lysine).

The protein belongs to the TrpB family. In terms of assembly, tetramer of two alpha and two beta chains. The cofactor is pyridoxal 5'-phosphate.

The enzyme catalyses (1S,2R)-1-C-(indol-3-yl)glycerol 3-phosphate + L-serine = D-glyceraldehyde 3-phosphate + L-tryptophan + H2O. It functions in the pathway amino-acid biosynthesis; L-tryptophan biosynthesis; L-tryptophan from chorismate: step 5/5. In terms of biological role, the beta subunit is responsible for the synthesis of L-tryptophan from indole and L-serine. This chain is Tryptophan synthase beta chain 2 (trpB2), found in Methanothermobacter marburgensis (strain ATCC BAA-927 / DSM 2133 / JCM 14651 / NBRC 100331 / OCM 82 / Marburg) (Methanobacterium thermoautotrophicum).